A 321-amino-acid chain; its full sequence is MWRSWLREAHQSFERLPYESKQDRVVEDISKAIMSIKEAIFGEDEQSSSKEHAQGIASEACRVGLVSDLVTYLTVLDFETRKDVVQIFCAIIRITLEDGGRPGRDYVLAHPDVLSTLFYGYEDPEIALNCGQMFRECIRHEDIAKFVLECNLFEELFEKLNVQSFEVASDAFATFKDLLTRHKQLVAAFLQENYEDFFSQLDKLLTSDNYVTRRQSLKLLGELLLDRVNVKIMMQYVSDVNNLILMMNLLKDSSRSIQFEAFHVFKVFVANPNKTKPVADILVNNKNKLLTYLEDFHNDRDDEQFKEEKAVIIKEISMMHA.

It belongs to the Mo25 family.

The chain is Degreening-related gene dee76 protein (DEE76) from Auxenochlorella protothecoides (Green microalga).